We begin with the raw amino-acid sequence, 163 residues long: UPF0478 protein SERP1299 (163 aa).

The chain crosses the membrane as a helical span at residues 7–27; sequence IAGIIAAIAFLILCIGIVVVL.

The protein belongs to the UPF0478 family.

It is found in the cell membrane. In Staphylococcus epidermidis (strain ATCC 35984 / DSM 28319 / BCRC 17069 / CCUG 31568 / BM 3577 / RP62A), this protein is UPF0478 protein SERP1299.